The chain runs to 95 residues: Histone-like DNA-binding protein (95 aa).

It belongs to the bacterial histone-like protein family.

This Rickettsia typhi (strain ATCC VR-144 / Wilmington) protein is Histone-like DNA-binding protein.